The following is a 512-amino-acid chain: uncharacterized protein (512 aa).

Residues 1–22 (MVSSLIYSLCAVSGLLATTVNG) form the signal peptide. Asparagine 167 carries N-linked (GlcNAc...) asparagine glycosylation. A disordered region spans residues 251 to 282 (SAASPPIYEPDRQTDPEDPETGRNNNQGFEGL).

It is found in the secreted. This is an uncharacterized protein from Arthroderma benhamiae (strain ATCC MYA-4681 / CBS 112371) (Trichophyton mentagrophytes).